Reading from the N-terminus, the 279-residue chain is Shikimate dehydrogenase (NADP(+)) (279 aa).

Shikimate is bound by residues 17 to 19 and Thr-64; that span reads SQS. Residue Lys-68 is the Proton acceptor of the active site. 2 residues coordinate shikimate: Asn-89 and Asp-105. Residues 130 to 134 and Leu-218 contribute to the NADP(+) site; that span reads GAGGA. Tyr-220 contributes to the shikimate binding site. Gly-242 serves as a coordination point for NADP(+).

The protein belongs to the shikimate dehydrogenase family. In terms of assembly, homodimer.

The catalysed reaction is shikimate + NADP(+) = 3-dehydroshikimate + NADPH + H(+). The protein operates within metabolic intermediate biosynthesis; chorismate biosynthesis; chorismate from D-erythrose 4-phosphate and phosphoenolpyruvate: step 4/7. Involved in the biosynthesis of the chorismate, which leads to the biosynthesis of aromatic amino acids. Catalyzes the reversible NADPH linked reduction of 3-dehydroshikimate (DHSA) to yield shikimate (SA). This Methylococcus capsulatus (strain ATCC 33009 / NCIMB 11132 / Bath) protein is Shikimate dehydrogenase (NADP(+)).